We begin with the raw amino-acid sequence, 522 residues long: Maturase K (522 aa).

Belongs to the intron maturase 2 family. MatK subfamily.

Its subcellular location is the plastid. It localises to the chloroplast. In terms of biological role, usually encoded in the trnK tRNA gene intron. Probably assists in splicing its own and other chloroplast group II introns. This is Maturase K from Pillansia templemannii.